The following is an 812-amino-acid chain: E3 UFM1-protein ligase 1 homolog (812 aa).

Residues isoleucine 389 to phenylalanine 495 form a disordered region. Composition is skewed to basic and acidic residues over residues serine 403–glycine 415 and aspartate 475–asparagine 491.

It belongs to the UFL1 family.

Functionally, E3 UFM1-protein ligase that mediates ufmylation of target proteins. This Oryza sativa subsp. indica (Rice) protein is E3 UFM1-protein ligase 1 homolog.